Consider the following 381-residue polypeptide: MSLNMFWFLPTHGDGHYLGTEEGSRPVDHGYLQQIAQAADRLGYTGVLIPTGRSCEDAWLVAASMIPVTQRLKFLVALRPSVTSPTVAARQAATLDRLSNGRALFNLVTGSDPQELAGDGVFLDHRERYEASAEFTQVWRRLLLGETVNFNGKHIHVRGAKLLFPPIQQPYPPLYFGGSSDVAQELAAEQVDFYLTWGEPPELVKEKIEQVRAKAAAHGRKIRFGIRLHVIVRETSDEAWQAAERLISHLDDETIAKAQAAFARTDSVGQQRMAALHNGKRDNLEISPNLWAGVGLVRGGAGTALVGDGPTVAARINEYAALGIDSFVLSGYPHLEEAYRVGELLFPHLDVAIPEIPQPQPLNPQGEAVANEFIPRKVAQS.

Belongs to the SsuD family. In terms of assembly, homotetramer.

It catalyses the reaction an alkanesulfonate + FMNH2 + O2 = an aldehyde + FMN + sulfite + H2O + 2 H(+). Functionally, catalyzes the desulfonation of aliphatic sulfonates. The protein is Alkanesulfonate monooxygenase of Escherichia coli O17:K52:H18 (strain UMN026 / ExPEC).